A 227-amino-acid polypeptide reads, in one-letter code: 7-cyano-7-deazaguanine synthase (227 aa).

8–18 (FSGGQDSTTCL) is a binding site for ATP. Zn(2+) contacts are provided by Cys187, Cys196, Cys199, and Cys202.

The protein belongs to the QueC family. Zn(2+) is required as a cofactor.

It carries out the reaction 7-carboxy-7-deazaguanine + NH4(+) + ATP = 7-cyano-7-deazaguanine + ADP + phosphate + H2O + H(+). The protein operates within purine metabolism; 7-cyano-7-deazaguanine biosynthesis. Catalyzes the ATP-dependent conversion of 7-carboxy-7-deazaguanine (CDG) to 7-cyano-7-deazaguanine (preQ(0)). The protein is 7-cyano-7-deazaguanine synthase of Aliivibrio fischeri (strain ATCC 700601 / ES114) (Vibrio fischeri).